A 253-amino-acid polypeptide reads, in one-letter code: uncharacterized protein (253 aa).

Belongs to the herpesviridae BTRF1 family.

This is an uncharacterized protein from Saimiriine herpesvirus 2 (strain 11) (SaHV-2).